The following is a 43-amino-acid chain: Protein PsbN (43 aa).

A helical transmembrane segment spans residues 4–24 (ATIIVIFVSSLLVGITAYSVY).

It belongs to the PsbN family.

It is found in the plastid. It localises to the chloroplast thylakoid membrane. Functionally, may play a role in photosystem I and II biogenesis. In Thalassiosira pseudonana (Marine diatom), this protein is Protein PsbN.